We begin with the raw amino-acid sequence, 171 residues long: Inosine/xanthosine triphosphatase (171 aa).

8–13 contacts substrate; the sequence is TTNPAK. Glu38 is a Mg(2+) binding site.

It belongs to the YjjX NTPase family. In terms of assembly, homodimer. Requires Mg(2+) as cofactor. Mn(2+) serves as cofactor.

It carries out the reaction XTP + H2O = XDP + phosphate + H(+). The catalysed reaction is ITP + H2O = IDP + phosphate + H(+). Its function is as follows. Phosphatase that hydrolyzes non-canonical purine nucleotides such as XTP and ITP to their respective diphosphate derivatives. Probably excludes non-canonical purines from DNA/RNA precursor pool, thus preventing their incorporation into DNA/RNA and avoiding chromosomal lesions. The polypeptide is Inosine/xanthosine triphosphatase (Klebsiella pneumoniae (strain 342)).